The chain runs to 94 residues: Small ribosomal subunit protein uS19 (94 aa).

The protein belongs to the universal ribosomal protein uS19 family.

Protein S19 forms a complex with S13 that binds strongly to the 16S ribosomal RNA. This chain is Small ribosomal subunit protein uS19, found in Finegoldia magna (strain ATCC 29328 / DSM 20472 / WAL 2508) (Peptostreptococcus magnus).